Consider the following 442-residue polypeptide: ATP-dependent protease ATPase subunit HslU (442 aa).

ATP-binding positions include I18, 60–65, D255, E320, and R392; that span reads GVGKTE.

It belongs to the ClpX chaperone family. HslU subfamily. In terms of assembly, a double ring-shaped homohexamer of HslV is capped on each side by a ring-shaped HslU homohexamer. The assembly of the HslU/HslV complex is dependent on binding of ATP.

The protein resides in the cytoplasm. Its function is as follows. ATPase subunit of a proteasome-like degradation complex; this subunit has chaperone activity. The binding of ATP and its subsequent hydrolysis by HslU are essential for unfolding of protein substrates subsequently hydrolyzed by HslV. HslU recognizes the N-terminal part of its protein substrates and unfolds these before they are guided to HslV for hydrolysis. The polypeptide is ATP-dependent protease ATPase subunit HslU (Aeromonas hydrophila subsp. hydrophila (strain ATCC 7966 / DSM 30187 / BCRC 13018 / CCUG 14551 / JCM 1027 / KCTC 2358 / NCIMB 9240 / NCTC 8049)).